Here is a 748-residue protein sequence, read N- to C-terminus: Long-chain-alcohol oxidase FAO4B (748 aa).

A compositionally biased stretch (basic residues) spans 1-18 (MEDVRRRNRGHPLLRSKK). The segment at 1–25 (MEDVRRRNRGHPLLRSKKRGEGYNH) is disordered. 2 helical membrane passes run 89-109 (IILM…SLCL) and 140-160 (FLLP…FYFF). An FAD-binding site is contributed by 238-253 (CDAVVVGSGSGGGVAA). The Proton acceptor role is filled by histidine 679.

It belongs to the GMC oxidoreductase family.

The protein localises to the membrane. It carries out the reaction a long-chain primary fatty alcohol + O2 = a long-chain fatty aldehyde + H2O2. Its function is as follows. Long-chain fatty alcohol oxidase involved in the omega-oxidation pathway of lipid degradation. The sequence is that of Long-chain-alcohol oxidase FAO4B (FAO4B) from Arabidopsis thaliana (Mouse-ear cress).